The sequence spans 302 residues: 4-diphosphocytidyl-2-C-methyl-D-erythritol kinase (302 aa).

Residue Lys-13 is part of the active site. An ATP-binding site is contributed by 101-111 (PVASGIGGGSS). The active site involves Asp-143.

It belongs to the GHMP kinase family. IspE subfamily.

The enzyme catalyses 4-CDP-2-C-methyl-D-erythritol + ATP = 4-CDP-2-C-methyl-D-erythritol 2-phosphate + ADP + H(+). The protein operates within isoprenoid biosynthesis; isopentenyl diphosphate biosynthesis via DXP pathway; isopentenyl diphosphate from 1-deoxy-D-xylulose 5-phosphate: step 3/6. Its function is as follows. Catalyzes the phosphorylation of the position 2 hydroxy group of 4-diphosphocytidyl-2C-methyl-D-erythritol. This is 4-diphosphocytidyl-2-C-methyl-D-erythritol kinase from Granulibacter bethesdensis (strain ATCC BAA-1260 / CGDNIH1).